The chain runs to 276 residues: Dermonecrotic toxin LsaSicTox-alphaIB2iii (276 aa).

The active site involves histidine 5. Mg(2+)-binding residues include glutamate 25 and aspartate 27. Histidine 41 serves as the catalytic Nucleophile. Disulfide bonds link cysteine 45/cysteine 51 and cysteine 47/cysteine 190. Aspartate 85 contacts Mg(2+). Residues asparagine 129 and asparagine 253 are each glycosylated (N-linked (GlcNAc...) asparagine).

Belongs to the arthropod phospholipase D family. Class II subfamily. Mg(2+) is required as a cofactor. Expressed by the venom gland.

It is found in the secreted. It carries out the reaction an N-(acyl)-sphingosylphosphocholine = an N-(acyl)-sphingosyl-1,3-cyclic phosphate + choline. It catalyses the reaction an N-(acyl)-sphingosylphosphoethanolamine = an N-(acyl)-sphingosyl-1,3-cyclic phosphate + ethanolamine. The catalysed reaction is a 1-acyl-sn-glycero-3-phosphocholine = a 1-acyl-sn-glycero-2,3-cyclic phosphate + choline. The enzyme catalyses a 1-acyl-sn-glycero-3-phosphoethanolamine = a 1-acyl-sn-glycero-2,3-cyclic phosphate + ethanolamine. Functionally, dermonecrotic toxins cleave the phosphodiester linkage between the phosphate and headgroup of certain phospholipids (sphingolipid and lysolipid substrates), forming an alcohol (often choline) and a cyclic phosphate. This toxin acts on sphingomyelin (SM). It may also act on ceramide phosphoethanolamine (CPE), lysophosphatidylcholine (LPC) and lysophosphatidylethanolamine (LPE), but not on lysophosphatidylserine (LPS), and lysophosphatidylglycerol (LPG). It acts by transphosphatidylation, releasing exclusively cyclic phosphate products as second products. Induces dermonecrosis, hemolysis, increased vascular permeability, edema, inflammatory response, and platelet aggregation. In Loxosceles sabina (Tucson recluse spider), this protein is Dermonecrotic toxin LsaSicTox-alphaIB2iii.